A 122-amino-acid polypeptide reads, in one-letter code: UPF0382 membrane protein SAB0533 (122 aa).

4 helical membrane-spanning segments follow: residues 3 to 23, 46 to 66, 69 to 89, and 98 to 118; these read LFII…AFGA, MYHG…SINV, AGWL…ILVL, and ITPI…IATF.

This sequence belongs to the UPF0382 family.

The protein localises to the cell membrane. This is UPF0382 membrane protein SAB0533 from Staphylococcus aureus (strain bovine RF122 / ET3-1).